The primary structure comprises 538 residues: Probable folate-biopterin transporter 9, chloroplastic (538 aa).

Residues 1–57 (MNNPLLSISNPVKFFKPPIPYRISLNTTINKKQKHQSKTLVVKSNKRSTTSLTSSVS) constitute a chloroplast transit peptide. 12 helical membrane passes run 85 to 105 (VLLC…WLAL), 129 to 149 (LPMV…IGGA), 152 to 172 (VPYI…LAIF), 178 to 198 (VLPS…ITEV), 220 to 240 (ALMA…YCLL), 246 to 266 (ILFL…LSSK), 309 to 329 (LIWI…VFCY), 339 to 359 (SVIG…TVVY), 370 to 390 (ALIH…YILV), 395 to 415 (LAFG…AEIL), 447 to 467 (LCLS…MIGI), and 479 to 499 (ILIQ…VPML).

The protein belongs to the major facilitator superfamily. Folate-biopterin transporter (TC 2.A.71) family.

It localises to the plastid. The protein resides in the chloroplast membrane. Could mediate folate transport. This chain is Probable folate-biopterin transporter 9, chloroplastic, found in Arabidopsis thaliana (Mouse-ear cress).